A 285-amino-acid polypeptide reads, in one-letter code: Golgi to ER traffic protein 2 (285 aa).

The span at 1–10 shows a compositional bias: basic and acidic residues; sequence MSELTEAEKR. Residues 1-71 form a disordered region; the sequence is MSELTEAEKR…HSATPDIKED (71 aa). Serine 2 is modified (N-acetylserine). Topologically, residues 2-148 are cytoplasmic; that stretch reads SELTEAEKRR…LDYHDYLLNR (147 aa). Over residues 11-20 the composition is skewed to basic residues; that stretch reads RLLRERRQKK. Residues 24 to 42 show a composition bias toward polar residues; the sequence is GGASSRLNKITGQASSHLN. The residue at position 45 (serine 45) is a Phosphoserine. The span at 49 to 60 shows a compositional bias: low complexity; the sequence is APSAAKATPPAS. Residues 149–169 traverse the membrane as a helical segment; it reads LKAWTILVKWVFFLLPYLYLI. At 170–196 the chain is on the lumenal side; it reads TRPNSSVWPAYAFTQSAWFAPLRNPSN. N-linked (GlcNAc...) asparagine glycans are attached at residues asparagine 173 and asparagine 196. Residues 197–216 form a helical membrane-spanning segment; it reads FTRIFATFEFLSISIYYQLL. The Cytoplasmic segment spans residues 217 to 263; sequence KNVEHKSKIKNLQDTNKLVKLVSLVPEGVIPVANLKGKLITLLQYWD. The helical transmembrane segment at 264-284 threads the bilayer; the sequence is LLSMLITDISFVLIVLGLLTY. Residue leucine 285 is a topological domain, lumenal.

It belongs to the GET2 family. As to quaternary structure, component of the Golgi to ER traffic (GET) complex, which is composed of GET1, GET2 and GET3. Within the complex, GET1 and GET2 form a heterotetramer which is stabilized by phosphatidylinositol binding and which binds to the GET3 homodimer.

It localises to the endoplasmic reticulum membrane. The protein resides in the golgi apparatus membrane. In terms of biological role, required for the post-translational delivery of tail-anchored (TA) proteins to the endoplasmic reticulum. Together with GET1, acts as a membrane receptor for soluble GET3, which recognizes and selectively binds the transmembrane domain of TA proteins in the cytosol. The GET complex cooperates with the HDEL receptor ERD2 to mediate the ATP-dependent retrieval of resident ER proteins that contain a C-terminal H-D-E-L retention signal from the Golgi to the ER. Involved in DNA replication and DNA damage response and also in cell wall function. The chain is Golgi to ER traffic protein 2 from Saccharomyces cerevisiae (strain YJM789) (Baker's yeast).